The primary structure comprises 110 residues: Iron-sulfur cluster assembly protein CyaY (110 aa).

This sequence belongs to the frataxin family.

In terms of biological role, involved in iron-sulfur (Fe-S) cluster assembly. May act as a regulator of Fe-S biogenesis. In Pseudomonas fluorescens (strain Pf0-1), this protein is Iron-sulfur cluster assembly protein CyaY.